The following is a 461-amino-acid chain: Coronin-1A (461 aa).

The residue at position 2 (serine 2) is an N-acetylserine. Serine 2 is subject to Phosphoserine; by PKC. WD repeat units follow at residues histidine 13–proline 63, asparagine 73–glutamate 110, proline 123–aspartate 160, glycine 164–glutamate 204, lysine 207–aspartate 251, proline 258–glutamate 296, and proline 302–alanine 349. The segment covering leucine 404–threonine 418 has biased composition (basic and acidic residues). Residues leucine 404–alanine 429 are disordered. Position 412 is a phosphothreonine; by PKC (threonine 412). Threonine 418 is subject to Phosphothreonine. At serine 422 the chain carries Phosphoserine. Residues alanine 424 to alanine 460 adopt a coiled-coil conformation. An N6-acetyllysine modification is found at lysine 449.

This sequence belongs to the WD repeat coronin family. Binds actin. Post-translationally, phosphorylation at Thr-412 by PKC strongly down-regulates the association with actin. Polyubiquitinated by RNF128 with 'Lys-48'-linked chains, leading to proteasomal degradation. As to expression, expressed in brain, thymus, spleen, bone marrow and lymph node. Low in lung and gut.

The protein resides in the cytoplasm. It is found in the cytoskeleton. The protein localises to the cell cortex. It localises to the cytoplasmic vesicle. Its subcellular location is the phagosome membrane. May be a crucial component of the cytoskeleton of highly motile cells, functioning both in the invagination of large pieces of plasma membrane, as well as in forming protrusions of the plasma membrane involved in cell locomotion. In mycobacteria-infected macrophages, its retention on the phagosomal membrane prevents fusion between phagosomes and lysosomes. This Bos taurus (Bovine) protein is Coronin-1A (CORO1A).